The primary structure comprises 421 residues: 4-hydroxy-3-methylbut-2-en-1-yl diphosphate synthase (flavodoxin) (421 aa).

Positions 298, 301, 344, and 351 each coordinate [4Fe-4S] cluster.

Belongs to the IspG family. [4Fe-4S] cluster is required as a cofactor.

It catalyses the reaction (2E)-4-hydroxy-3-methylbut-2-enyl diphosphate + oxidized [flavodoxin] + H2O + 2 H(+) = 2-C-methyl-D-erythritol 2,4-cyclic diphosphate + reduced [flavodoxin]. The protein operates within isoprenoid biosynthesis; isopentenyl diphosphate biosynthesis via DXP pathway; isopentenyl diphosphate from 1-deoxy-D-xylulose 5-phosphate: step 5/6. Converts 2C-methyl-D-erythritol 2,4-cyclodiphosphate (ME-2,4cPP) into 1-hydroxy-2-methyl-2-(E)-butenyl 4-diphosphate. This Neisseria meningitidis serogroup C (strain 053442) protein is 4-hydroxy-3-methylbut-2-en-1-yl diphosphate synthase (flavodoxin).